The following is a 424-amino-acid chain: Serine--tRNA ligase (424 aa).

231–233 is an L-serine binding site; sequence TAE. 262–264 is an ATP binding site; the sequence is RAE. L-serine is bound at residue E285. 349-352 contacts ATP; it reads EISS. S385 contributes to the L-serine binding site.

This sequence belongs to the class-II aminoacyl-tRNA synthetase family. Type-1 seryl-tRNA synthetase subfamily. As to quaternary structure, homodimer. The tRNA molecule binds across the dimer.

Its subcellular location is the cytoplasm. It catalyses the reaction tRNA(Ser) + L-serine + ATP = L-seryl-tRNA(Ser) + AMP + diphosphate + H(+). The enzyme catalyses tRNA(Sec) + L-serine + ATP = L-seryl-tRNA(Sec) + AMP + diphosphate + H(+). It participates in aminoacyl-tRNA biosynthesis; selenocysteinyl-tRNA(Sec) biosynthesis; L-seryl-tRNA(Sec) from L-serine and tRNA(Sec): step 1/1. In terms of biological role, catalyzes the attachment of serine to tRNA(Ser). Is also able to aminoacylate tRNA(Sec) with serine, to form the misacylated tRNA L-seryl-tRNA(Sec), which will be further converted into selenocysteinyl-tRNA(Sec). The protein is Serine--tRNA ligase of Geobacillus thermodenitrificans (strain NG80-2).